A 192-amino-acid chain; its full sequence is Pyridoxal 5'-phosphate synthase subunit PdxT (192 aa).

An L-glutamine-binding site is contributed by 53 to 55 (GES). The Nucleophile role is filled by Cys-85. Residues Arg-112 and 140–141 (IR) contribute to the L-glutamine site. Residues His-176 and Glu-178 each act as charge relay system in the active site.

It belongs to the glutaminase PdxT/SNO family. As to quaternary structure, in the presence of PdxS, forms a dodecamer of heterodimers. Only shows activity in the heterodimer.

It catalyses the reaction aldehydo-D-ribose 5-phosphate + D-glyceraldehyde 3-phosphate + L-glutamine = pyridoxal 5'-phosphate + L-glutamate + phosphate + 3 H2O + H(+). The enzyme catalyses L-glutamine + H2O = L-glutamate + NH4(+). Its pathway is cofactor biosynthesis; pyridoxal 5'-phosphate biosynthesis. Its function is as follows. Catalyzes the hydrolysis of glutamine to glutamate and ammonia as part of the biosynthesis of pyridoxal 5'-phosphate. The resulting ammonia molecule is channeled to the active site of PdxS. This Natronomonas pharaonis (strain ATCC 35678 / DSM 2160 / CIP 103997 / JCM 8858 / NBRC 14720 / NCIMB 2260 / Gabara) (Halobacterium pharaonis) protein is Pyridoxal 5'-phosphate synthase subunit PdxT.